Here is a 169-residue protein sequence, read N- to C-terminus: Putative glycine cleavage system H protein, mitochondrial (169 aa).

Residues 60–142 enclose the Lipoyl-binding domain; that stretch reads VGTVGITSYA…EEEGWICKIK (83 aa). K101 carries the N6-lipoyllysine modification. Phosphoserine is present on S131.

It belongs to the GcvH family. Component of the glycine decarboxylase complex (GDC), which is composed of four proteins: P, T, L and H. It depends on (R)-lipoate as a cofactor.

Its subcellular location is the mitochondrion. Functionally, the glycine cleavage system (glycine decarboxylase complex) catalyzes the degradation of glycine. The H protein shuttles the methylamine group of glycine from the P protein to the T protein. This chain is Putative glycine cleavage system H protein, mitochondrial (gcv3), found in Schizosaccharomyces pombe (strain 972 / ATCC 24843) (Fission yeast).